The following is a 144-amino-acid chain: Large ribosomal subunit protein uL16 (144 aa).

A compositionally biased stretch (basic residues) spans 1–19 (MLLPKRVKYRRQHRPKTTG). A disordered region spans residues 1–23 (MLLPKRVKYRRQHRPKTTGRSKG).

It belongs to the universal ribosomal protein uL16 family. Part of the 50S ribosomal subunit.

Functionally, binds 23S rRNA and is also seen to make contacts with the A and possibly P site tRNAs. The chain is Large ribosomal subunit protein uL16 from Staphylococcus haemolyticus (strain JCSC1435).